Here is a 299-residue protein sequence, read N- to C-terminus: Delta-9 desaturase-like 5 protein (299 aa).

Helical transmembrane passes span 31-51 and 55-75; these read ADII…LAPF and WEAL…ITFS. The Histidine box-1 motif lies at 77-82; sequence HRNLAH. A Histidine box-2 motif is present at residues 114 to 118; the sequence is HRFHH. The next 2 membrane-spanning stretches (helical) occupy residues 174 to 194 and 199 to 219; these read IGFH…LPYL and GVGG…CHIW. A Histidine box-3 motif is present at residues 246–250; sequence HNNHH.

Belongs to the fatty acid desaturase type 1 family. Fe cation is required as a cofactor.

It is found in the endoplasmic reticulum membrane. It participates in lipid metabolism; polyunsaturated fatty acid biosynthesis. In Arabidopsis thaliana (Mouse-ear cress), this protein is Delta-9 desaturase-like 5 protein.